The following is a 274-amino-acid chain: Large ribosomal subunit protein uL2 (274 aa).

A disordered region spans residues 223–256 (VVMNPVDHPHGGGEGKTGEGRHPVDPWGNLTKGY). Positions 229–246 (DHPHGGGEGKTGEGRHPV) are enriched in basic and acidic residues.

This sequence belongs to the universal ribosomal protein uL2 family. As to quaternary structure, part of the 50S ribosomal subunit. Forms a bridge to the 30S subunit in the 70S ribosome.

One of the primary rRNA binding proteins. Required for association of the 30S and 50S subunits to form the 70S ribosome, for tRNA binding and peptide bond formation. It has been suggested to have peptidyltransferase activity; this is somewhat controversial. Makes several contacts with the 16S rRNA in the 70S ribosome. This chain is Large ribosomal subunit protein uL2, found in Variovorax paradoxus (strain S110).